The following is a 483-amino-acid chain: Protein disulfide-isomerase 5-3 (483 aa).

N-linked (GlcNAc...) asparagine glycans are attached at residues Asn53, Asn74, and Asn99. The region spanning 133 to 263 (EETKEEFPDG…IVKMVEGLVA (131 aa)) is the Thioredoxin domain. The active-site Nucleophile is Cys170. Residues Asn279, Asn326, and Asn376 are each glycosylated (N-linked (GlcNAc...) asparagine). A helical transmembrane segment spans residues 442–462 (FSHFITNLCAIIGGVFTVAGI).

This sequence belongs to the protein disulfide isomerase family. In terms of tissue distribution, widely expressed.

Its subcellular location is the membrane. Acts as a protein-folding catalyst that interacts with nascent polypeptides to catalyze the formation, isomerization, and reduction or oxidation of disulfide bonds. This Arabidopsis thaliana (Mouse-ear cress) protein is Protein disulfide-isomerase 5-3 (PDIL5-3).